The sequence spans 252 residues: Ubiquinone biosynthesis O-methyltransferase (252 aa).

S-adenosyl-L-methionine-binding residues include arginine 51, glycine 70, aspartate 91, and methionine 136.

Belongs to the methyltransferase superfamily. UbiG/COQ3 family.

The catalysed reaction is a 3-demethylubiquinol + S-adenosyl-L-methionine = a ubiquinol + S-adenosyl-L-homocysteine + H(+). It catalyses the reaction a 3-(all-trans-polyprenyl)benzene-1,2-diol + S-adenosyl-L-methionine = a 2-methoxy-6-(all-trans-polyprenyl)phenol + S-adenosyl-L-homocysteine + H(+). The protein operates within cofactor biosynthesis; ubiquinone biosynthesis. O-methyltransferase that catalyzes the 2 O-methylation steps in the ubiquinone biosynthetic pathway. This chain is Ubiquinone biosynthesis O-methyltransferase, found in Albidiferax ferrireducens (strain ATCC BAA-621 / DSM 15236 / T118) (Rhodoferax ferrireducens).